A 201-amino-acid polypeptide reads, in one-letter code: Peptidyl-tRNA hydrolase (201 aa).

Tyr-14 is a tRNA binding site. Catalysis depends on His-19, which acts as the Proton acceptor. TRNA-binding residues include Tyr-64, Asn-66, and Asn-112.

This sequence belongs to the PTH family. Monomer.

The protein resides in the cytoplasm. The catalysed reaction is an N-acyl-L-alpha-aminoacyl-tRNA + H2O = an N-acyl-L-amino acid + a tRNA + H(+). Functionally, hydrolyzes ribosome-free peptidyl-tRNAs (with 1 or more amino acids incorporated), which drop off the ribosome during protein synthesis, or as a result of ribosome stalling. Catalyzes the release of premature peptidyl moieties from peptidyl-tRNA molecules trapped in stalled 50S ribosomal subunits, and thus maintains levels of free tRNAs and 50S ribosomes. This Bradyrhizobium sp. (strain ORS 278) protein is Peptidyl-tRNA hydrolase.